Reading from the N-terminus, the 506-residue chain is Ribose import ATP-binding protein RbsA 2 (506 aa).

2 consecutive ABC transporter domains span residues 6–241 and 254–499; these read LSMT…VGRV and EKSN…SITI. 38-45 contributes to the ATP binding site; that stretch reads GENGAGKS.

The protein belongs to the ABC transporter superfamily. Ribose importer (TC 3.A.1.2.1) family. The complex is composed of an ATP-binding protein (RbsA), two transmembrane proteins (RbsC) and a solute-binding protein (RbsB).

The protein resides in the cell inner membrane. It carries out the reaction D-ribose(out) + ATP + H2O = D-ribose(in) + ADP + phosphate + H(+). Its function is as follows. Part of the ABC transporter complex RbsABC involved in ribose import. Responsible for energy coupling to the transport system. The sequence is that of Ribose import ATP-binding protein RbsA 2 from Agrobacterium fabrum (strain C58 / ATCC 33970) (Agrobacterium tumefaciens (strain C58)).